The sequence spans 404 residues: SL1278 acyltransferase Chp1 (404 aa).

Residues 1–42 (MKCPGVSDCVATVRHDNVFAIAAGLRWSAAVPPLHKGDAVTK) lie on the Periplasmic side of the membrane. A helical transmembrane segment spans residues 43-63 (LLVGAIAGGMLACAAILGDGI). Topologically, residues 64 to 404 (ASADTALIVP…RGLLPKGKKH (341 aa)) are cytoplasmic. One can recognise a PE-PPE domain in the interval 104-325 (PTATRHVVSY…LRPIIDRAYQ (222 aa)).

This sequence belongs to the mycobacterial PPE family.

It is found in the cell inner membrane. It catalyses the reaction 3 3'-(hydroxy)phthioceranyl-2'-palmitoyl(stearoyl)-2-O-sulfo-alpha,alpha-trehalose = 3,6,6'-tris-(hydroxy)phthioceranyl-2-palmitoyl(stearoyl)-2'-sulfo-alpha-alpha-trehalose + 2 2'-palmitoyl/stearoyl-2-O-sulfo-alpha,alpha-trehalose.. Activity is potentiated by the SL-1 transporter MmpL8. Inhibited by the lipase inhibitor tetrahydrolipstatin (THL). Functionally, involved in the final steps of the cell wall sulfolipid-1 (SL-1) biosynthesis. Catalyzes two successive acylations of the precursor 2-palmitoyl-3-(C43)-phthioceranyl-alpha, alpha'-D-trehalose-2'-sulfate (SL1278) to yield the tetraacylated sulfolipid SL-1. The protein is SL1278 acyltransferase Chp1 of Mycobacterium tuberculosis (strain ATCC 25618 / H37Rv).